A 141-amino-acid polypeptide reads, in one-letter code: Keratin-associated protein 19-2 (141 aa).

The tract at residues 5–135 (SGYSGGLGYG…CRRSSCCGGY (131 aa)) is 48 X 2 AA repeats of G-[YCGS].

This sequence belongs to the KRTAP type 19 family. Interacts with hair keratins. As to expression, strong expression in narrowly defined pattern restricted to the lower and middle cortical regions of the hair shaft in both developing and cycling hair. During hair follicle regression (catagen), expression levels decrease until expression is no longer detectable in follicles at resting stage (telogen).

Functionally, in the hair cortex, hair keratin intermediate filaments are embedded in an interfilamentous matrix, consisting of hair keratin-associated proteins (KRTAP), which are essential for the formation of a rigid and resistant hair shaft through their extensive disulfide bond cross-linking with abundant cysteine residues of hair keratins. The matrix proteins include the high-sulfur and high-glycine-tyrosine keratins. The sequence is that of Keratin-associated protein 19-2 (Krtap19-2) from Mus musculus (Mouse).